The chain runs to 293 residues: 4-hydroxy-tetrahydrodipicolinate synthase (293 aa).

T44 serves as a coordination point for pyruvate. Catalysis depends on Y132, which acts as the Proton donor/acceptor. Catalysis depends on K161, which acts as the Schiff-base intermediate with substrate. Residue I205 participates in pyruvate binding.

The protein belongs to the DapA family. Homotetramer; dimer of dimers.

Its subcellular location is the cytoplasm. The catalysed reaction is L-aspartate 4-semialdehyde + pyruvate = (2S,4S)-4-hydroxy-2,3,4,5-tetrahydrodipicolinate + H2O + H(+). It participates in amino-acid biosynthesis; L-lysine biosynthesis via DAP pathway; (S)-tetrahydrodipicolinate from L-aspartate: step 3/4. Catalyzes the condensation of (S)-aspartate-beta-semialdehyde [(S)-ASA] and pyruvate to 4-hydroxy-tetrahydrodipicolinate (HTPA). The protein is 4-hydroxy-tetrahydrodipicolinate synthase of Thermosipho africanus (strain TCF52B).